The chain runs to 456 residues: RuvB-like helicase 1 (456 aa).

70–77 (GPPGTGKT) is an ATP binding site.

Belongs to the RuvB family. As to quaternary structure, forms homohexameric rings. May form a dodecamer with rept made of two stacked hexameric rings. Component of the chromatin remodeling Ino80 complex.

Its subcellular location is the nucleus. It carries out the reaction ATP + H2O = ADP + phosphate + H(+). Its function is as follows. Acts as a transcriptional coactivator in Wg signaling. Proposed core component of the chromatin remodeling Ino80 complex which is involved in transcriptional regulation, DNA replication and probably DNA repair. The polypeptide is RuvB-like helicase 1 (Aedes aegypti (Yellowfever mosquito)).